We begin with the raw amino-acid sequence, 528 residues long: PC4 and SFRS1-interacting protein (528 aa).

A PWWP domain is found at 7 to 64; sequence PGDLIFAKMKGYPHWPARVDEVPDGAVKPPTNKLPIFFFGTHETAFLGPKDIFPYSEN. K75 is covalently cross-linked (Glycyl lysine isopeptide (Lys-Gly) (interchain with G-Cter in SUMO2)). The segment at 86–347 is disordered; it reads NNPKVKFSSQ…VEKKRETSMD (262 aa). Positions 92–106 are enriched in polar residues; the sequence is FSSQQVSTKQSNASS. 3 positions are modified to phosphoserine: S102, S105, and S106. Residues 113–135 show a composition bias toward basic and acidic residues; it reads KETSVSKEDTDQEEKASNEDVTK. Phosphothreonine occurs at positions 115 and 122. Position 129 is a phosphoserine (S129). T141 carries the phosphothreonine modification. Over residues 144–153 the composition is skewed to basic residues; it reads AARRGRKRKA. Positions 146 to 156 match the Nuclear localization signal motif; sequence RRGRKRKAEKQ. Phosphoserine is present on residues S176 and S205. A compositionally biased stretch (basic and acidic residues) spans 212–260; the sequence is DEDKSKKKGPEEKPPKKQLKKEEEGQKEEEKPRKEPDKKEGKKEVESKR. The residue at position 270 (S270) is a Phosphoserine. T271 bears the Phosphothreonine mark. Phosphoserine is present on residues S272 and S274. A compositionally biased stretch (basic residues) spans 285 to 300; the sequence is KRKGGRHFQAAHRRNM. The segment covering 303–347 has biased composition (basic and acidic residues); that stretch reads GQHEKEAADRKRKQEEQMETEQQTKDEGKKPEVKKVEKKRETSMD. Coiled coils occupy residues 304 to 332 and 369 to 393; these read QHEK…EGKK and NRCI…KHTE. Residues 338-415 form an integrase-binding domain (IBD) region; that stretch reads VEKKRETSMD…VSQVIMEKST (78 aa). S432 carries the phosphoserine modification. Phosphothreonine is present on T435. S441 is modified (phosphoserine). Positions 444–471 are enriched in basic and acidic residues; that stretch reads EQRQHEEANKTKDQGKKGPNKKLEKEQT. The segment at 444 to 528 is disordered; the sequence is EQRQHEEANK…VSLKESTLDN (85 aa). The span at 472 to 492 shows a compositional bias: polar residues; the sequence is GTKSLNGGSDAQESNHPQHNG. The span at 496-528 shows a compositional bias: basic and acidic residues; sequence EESKDSREAGSKTKTPGEEREAEVSLKESTLDN. R515 carries the citrulline modification. Residue S520 is modified to Phosphoserine. The residue at position 525 (T525) is a Phosphothreonine.

Belongs to the HDGF family. Monomer. Interacts with IFRD1/PC4. Interacts (via IBD domain) with POGZ (via IBM motif) and CDCA7L (via IBM motifs). Interacts (via IBD domain) with KMT2A (via IBM motifs) with a moderate affinity whereas interacts with the KMT2A-MEN1 complex with a greater affinity; MEN1 enhances interaction of KMT2A with PSIP1. Interacts (via IBD domain) with IWS1 (via IBM motif), MED1 (via IBM motif) and DBF4 (via IBM motifs). In terms of processing, citrullinated by PADI4.

Its subcellular location is the nucleus. Its function is as follows. Transcriptional coactivator involved in neuroepithelial stem cell differentiation and neurogenesis. Involved in particular in lens epithelial cell gene regulation and stress responses. May play an important role in lens epithelial to fiber cell terminal differentiation. May play a protective role during stress-induced apoptosis. The chain is PC4 and SFRS1-interacting protein (Psip1) from Rattus norvegicus (Rat).